We begin with the raw amino-acid sequence, 397 residues long: Ribosomal RNA large subunit methyltransferase I (397 aa).

In terms of domain architecture, PUA spans 2 to 80 (AIRIKLKPGR…KEEAIDADFF (79 aa)).

The protein belongs to the methyltransferase superfamily. RlmI family.

It is found in the cytoplasm. It catalyses the reaction cytidine(1962) in 23S rRNA + S-adenosyl-L-methionine = 5-methylcytidine(1962) in 23S rRNA + S-adenosyl-L-homocysteine + H(+). In terms of biological role, specifically methylates the cytosine at position 1962 (m5C1962) of 23S rRNA. The polypeptide is Ribosomal RNA large subunit methyltransferase I (Shewanella denitrificans (strain OS217 / ATCC BAA-1090 / DSM 15013)).